Reading from the N-terminus, the 156-residue chain is Ribonuclease H (156 aa).

The RNase H type-1 domain occupies 1–142 (MNKQVEIFTD…CDELARQAAE (142 aa)). Residues Asp-10, Glu-48, Asp-70, and Asp-134 each contribute to the Mg(2+) site. Residues 135–156 (ELARQAAENPTEDDIGYQPEPQ) are disordered.

Belongs to the RNase H family. Monomer. The cofactor is Mg(2+).

It localises to the cytoplasm. It catalyses the reaction Endonucleolytic cleavage to 5'-phosphomonoester.. In terms of biological role, endonuclease that specifically degrades the RNA of RNA-DNA hybrids. In Vibrio cholerae serotype O1 (strain M66-2), this protein is Ribonuclease H.